The primary structure comprises 228 residues: UPF0173 metal-dependent hydrolase Smar_0891 (228 aa).

This sequence belongs to the UPF0173 family.

The sequence is that of UPF0173 metal-dependent hydrolase Smar_0891 from Staphylothermus marinus (strain ATCC 43588 / DSM 3639 / JCM 9404 / F1).